The following is a 352-amino-acid chain: Phosphoribosylformylglycinamidine cyclo-ligase (352 aa).

Belongs to the AIR synthase family.

Its subcellular location is the cytoplasm. It catalyses the reaction 2-formamido-N(1)-(5-O-phospho-beta-D-ribosyl)acetamidine + ATP = 5-amino-1-(5-phospho-beta-D-ribosyl)imidazole + ADP + phosphate + H(+). It participates in purine metabolism; IMP biosynthesis via de novo pathway; 5-amino-1-(5-phospho-D-ribosyl)imidazole from N(2)-formyl-N(1)-(5-phospho-D-ribosyl)glycinamide: step 2/2. This chain is Phosphoribosylformylglycinamidine cyclo-ligase, found in Pseudomonas fluorescens (strain Pf0-1).